Reading from the N-terminus, the 277-residue chain is Probable septum site-determining protein MinC (277 aa).

Residues 137 to 164 form a disordered region; sequence ATTGNAPAEPAPAEPAAPAAAPQPPAVP. The span at 145 to 164 shows a compositional bias: pro residues; sequence EPAPAEPAAPAAAPQPPAVP.

The protein belongs to the MinC family. In terms of assembly, interacts with MinD and FtsZ.

In terms of biological role, cell division inhibitor that blocks the formation of polar Z ring septums. Rapidly oscillates between the poles of the cell to destabilize FtsZ filaments that have formed before they mature into polar Z rings. Prevents FtsZ polymerization. The polypeptide is Probable septum site-determining protein MinC (Bordetella petrii (strain ATCC BAA-461 / DSM 12804 / CCUG 43448)).